The primary structure comprises 83 residues: Disintegrin bitistatin (83 aa).

A Disintegrin domain is found at 2-83 (PPVCGNKILE…GKSSDCPWNH (82 aa)). Disulfide bonds link cysteine 5/cysteine 24, cysteine 5/cysteine 34, cysteine 16/cysteine 29, cysteine 16/cysteine 34, cysteine 18/cysteine 24, cysteine 18/cysteine 29, cysteine 28/cysteine 51, cysteine 42/cysteine 48, cysteine 47/cysteine 72, and cysteine 60/cysteine 79. The short motif at 64-66 (RGD) is the Cell attachment site element.

It belongs to the venom metalloproteinase (M12B) family. P-II subfamily. P-IIa sub-subfamily. Monomer. Exists in 3 forms in the venom. The forms A, B, and C are present at 53%, 32% and 15%. The forms A and B differ by their disulfide bond pattern in the N-terminal part. No information is known about form C. As to expression, expressed by the venom gland.

It localises to the secreted. In terms of biological role, inhibits fibrinogen interaction with platelets. Acts by binding to alpha-IIb/beta-3 (ITGA2B/ITGB3) on the platelet surface and inhibits aggregation induced by ADP, thrombin, platelet-activating factor and collagen. This chain is Disintegrin bitistatin, found in Bitis arietans (African puff adder).